The following is a 194-amino-acid chain: Threonylcarbamoyl-AMP synthase (194 aa).

The 184-residue stretch at 11–194 (FRNLMKIINA…GINYKIIRKG (184 aa)) folds into the YrdC-like domain.

Belongs to the SUA5 family. TsaC subfamily.

Its subcellular location is the cytoplasm. It carries out the reaction L-threonine + hydrogencarbonate + ATP = L-threonylcarbamoyladenylate + diphosphate + H2O. Its function is as follows. Required for the formation of a threonylcarbamoyl group on adenosine at position 37 (t(6)A37) in tRNAs that read codons beginning with adenine. Catalyzes the conversion of L-threonine, HCO(3)(-)/CO(2) and ATP to give threonylcarbamoyl-AMP (TC-AMP) as the acyladenylate intermediate, with the release of diphosphate. The protein is Threonylcarbamoyl-AMP synthase of Wigglesworthia glossinidia brevipalpis.